A 162-amino-acid chain; its full sequence is Cyclic pyranopterin monophosphate synthase (162 aa).

Substrate-binding positions include 75 to 77 and 113 to 114; these read LCH and ME. D128 is an active-site residue.

This sequence belongs to the MoaC family. In terms of assembly, homohexamer; trimer of dimers.

The catalysed reaction is (8S)-3',8-cyclo-7,8-dihydroguanosine 5'-triphosphate = cyclic pyranopterin phosphate + diphosphate. Its pathway is cofactor biosynthesis; molybdopterin biosynthesis. In terms of biological role, catalyzes the conversion of (8S)-3',8-cyclo-7,8-dihydroguanosine 5'-triphosphate to cyclic pyranopterin monophosphate (cPMP). In Burkholderia lata (strain ATCC 17760 / DSM 23089 / LMG 22485 / NCIMB 9086 / R18194 / 383), this protein is Cyclic pyranopterin monophosphate synthase.